A 188-amino-acid polypeptide reads, in one-letter code: C-type lectin domain family 5 member A (188 aa).

The Cytoplasmic portion of the chain corresponds to 1 to 4; sequence MNWH. A helical; Signal-anchor for type II membrane protein transmembrane segment spans residues 5-27; the sequence is MIISGLIVVVLKVVGMTLFLLYF. The Extracellular portion of the chain corresponds to 28–188; the sequence is PQIFNKSNDG…YRRICEKNAK (161 aa). A glycan (N-linked (GlcNAc...) asparagine) is linked at N32. Cysteines 71 and 82 form a disulfide. The C-type lectin domain maps to 78-184; sequence YQARCFFLST…CDISYRRICE (107 aa). 3 N-linked (GlcNAc...) asparagine glycosylation sites follow: N93, N144, and N151. Disulfide bonds link C99-C183 and C161-C175.

Monomer. Homodimer. The majority of CLEC5A is expressed as a monomeric form on macrophages. Interacts with TYROBP/DAP12. The interaction with TYROBP is required for CLEC5A cell surface expression. Interacts with HCST/DAP10. Forms a CLEC5A/TYROBP/HCST trimolecular complex depending almost solely on TYROBP. As to quaternary structure, (Microbial infection) Interacts with dengue virus envelope protein E. N-glycosylated. Contains sialic acid residues. Highly expressed in bone marrow with lower levels in synovium, lung and bronchus. Expressed in peripheral blood monocytes and in the monocyte/macrophage cell lines U-937 and Mono-Mac-6, but not in cell lines of other origins. Expression is down-regulated when monocytes differentiate into dendritic cells.

The protein resides in the cell membrane. Its function is as follows. Functions as a positive regulator of osteoclastogenesis. Cell surface receptor that signals via TYROBP. Regulates inflammatory responses. (Microbial infection) Critical macrophage receptor for dengue virus serotypes 1-4. The binding of dengue virus to CLEC5A triggers signaling through the phosphorylation of TYROBP. This interaction does not result in viral entry, but stimulates pro-inflammatory cytokine release. This is C-type lectin domain family 5 member A (CLEC5A) from Homo sapiens (Human).